The following is a 121-amino-acid chain: Small ribosomal subunit protein uS13 (121 aa).

The interval histidine 91–lysine 121 is disordered. A compositionally biased stretch (basic residues) spans alanine 106–lysine 121.

It belongs to the universal ribosomal protein uS13 family. As to quaternary structure, part of the 30S ribosomal subunit. Forms a loose heterodimer with protein S19. Forms two bridges to the 50S subunit in the 70S ribosome.

In terms of biological role, located at the top of the head of the 30S subunit, it contacts several helices of the 16S rRNA. In the 70S ribosome it contacts the 23S rRNA (bridge B1a) and protein L5 of the 50S subunit (bridge B1b), connecting the 2 subunits; these bridges are implicated in subunit movement. Contacts the tRNAs in the A and P-sites. This chain is Small ribosomal subunit protein uS13, found in Macrococcus caseolyticus (strain JCSC5402) (Macrococcoides caseolyticum).